Consider the following 68-residue polypeptide: Large ribosomal subunit protein uL30 (68 aa).

This sequence belongs to the universal ribosomal protein uL30 family. Part of the 50S ribosomal subunit.

The protein is Large ribosomal subunit protein uL30 of Bartonella quintana (strain Toulouse) (Rochalimaea quintana).